An 83-amino-acid polypeptide reads, in one-letter code: Mu-theraphotoxin-Hhn2c (83 aa).

Residues 1 to 21 form the signal peptide; sequence MKASMFLALAGLVLLFVVGYA. Residues 22–48 constitute a propeptide that is removed on maturation; that stretch reads SESEEKEFPIELLSKIFAVDVFKGEER. 3 disulfide bridges follow: C50–C65, C57–C70, and C64–C77. The residue at position 81 (L81) is a Leucine amide.

It belongs to the neurotoxin 10 (Hwtx-1) family. 15 (Hntx-3) subfamily. In terms of assembly, monomer. Expressed by the venom gland.

Its subcellular location is the secreted. Lethal neurotoxin. Selectively blocks tetrodotoxin-sensitive voltage-gated sodium channels (Nav). Does not affect tetrodotoxin-resistant voltage-gated sodium channels or calcium channels. This Cyriopagopus hainanus (Chinese bird spider) protein is Mu-theraphotoxin-Hhn2c.